Here is a 147-residue protein sequence, read N- to C-terminus: Terminase small subunit (147 aa).

The segment at 25–50 (NATKAAIAAGYSKKSASTIAAENMQK) is helix-turn-helix (HTH).

This sequence belongs to the SPP1-like small terminase family. As to quaternary structure, homodecamer. Interacts with the terminase large subunit gp2; the active complex is probably composed of a one monomer of gp2 and two or more decamers of gp1.

In terms of biological role, the terminase small subunit specifically recognizes the non-adjacent pacL and pacR packaging subsites and regulates the ATPase activity of the terminase large subunit. The terminase lies at a unique vertex of the procapsid and is composed of two subunits, a small terminase subunit involved in viral DNA recognition (packaging 'pac' sequence), and a large terminase subunit possessing endonucleolytic and ATPase activities. Both terminase subunits heterooligomerize and are docked on the portal protein to form the packaging machine. The terminase large subunit exhibits endonuclease activity and cleaves the viral genome concatemer once the capsid is full (headful packaging). Once the capsid is packaged with the DNA, the terminase complex is substituted by neck proteins. The sequence is that of Terminase small subunit (1) from Bacillus subtilis (Bacteriophage SPP1).